Consider the following 582-residue polypeptide: TRAF-type zinc finger domain-containing protein 1 (582 aa).

An N-acetylalanine modification is found at Ala2. Residues 27-103 (IHEIHCQRNI…DLELSILKLK (77 aa)) form a TRAF-type zinc finger. At Ser191 the chain carries Phosphoserine. The segment at 216–238 (EEQERQERNRGQQPPKEGGEDGA) is disordered. Residues Ser278, Ser320, Ser326, Ser327, Ser409, Ser415, Ser430, and Ser470 each carry the phosphoserine modification. Disordered regions lie at residues 402–509 (EGIP…IAPG) and 522–582 (PENI…EEEE). Composition is skewed to polar residues over residues 454–471 (PFNN…STSG) and 486–504 (LNNS…SQNG).

Interacts with MAVS, TICAM1, TRAF1, TRAF2, TRAF3 and TRAF6.

In terms of biological role, negative feedback regulator that controls excessive innate immune responses. Regulates both Toll-like receptor 4 (TLR4) and DDX58/RIG1-like helicases (RLH) pathways. May inhibit the LTR pathway by direct interaction with TRAF6 and attenuation of NF-kappa-B activation. May negatively regulate the RLH pathway downstream from MAVS and upstream of NF-kappa-B and IRF3. This is TRAF-type zinc finger domain-containing protein 1 (TRAFD1) from Macaca fascicularis (Crab-eating macaque).